We begin with the raw amino-acid sequence, 267 residues long: 4,5-DOPA dioxygenase extradiol (267 aa).

4 residues coordinate Zn(2+): histidine 9, histidine 47, histidine 168, and histidine 222.

It belongs to the DODA-type extradiol aromatic ring-opening dioxygenase family. It depends on Zn(2+) as a cofactor. Fe(2+) is required as a cofactor. In terms of tissue distribution, expressed in petals. Not detected in leaves, stems and roots.

It localises to the cytoplasm. The enzyme catalyses L-dopa + O2 = 4-(L-alanin-3-yl)-2-hydroxy-cis,cis-muconate 6-semialdehyde + H(+). The protein operates within pigment biosynthesis; betalain biosynthesis. Its function is as follows. Opens the cyclic ring of dihydroxy-phenylalanine (DOPA) between carbons 4 and 5, thus producing an unstable seco-DOPA that rearranges nonenzymatically to betalamic acid. Produces mainly (S)-betalamic acid. Required for the coloration of flowers. The polypeptide is 4,5-DOPA dioxygenase extradiol (DOD) (Mirabilis jalapa (Garden four-o'clock)).